We begin with the raw amino-acid sequence, 573 residues long: DEAD-box ATP-dependent RNA helicase 47B (573 aa).

A Q motif motif is present at residues K131–S159. The Helicase ATP-binding domain maps to I162–V362. S175–T182 is a binding site for ATP. Positions D293–D296 match the DEAD box motif. The Helicase C-terminal domain occupies T421 to L565.

Belongs to the DEAD box helicase family.

The enzyme catalyses ATP + H2O = ADP + phosphate + H(+). This is DEAD-box ATP-dependent RNA helicase 47B from Oryza sativa subsp. japonica (Rice).